The chain runs to 185 residues: Ribosome-recycling factor (185 aa).

It belongs to the RRF family.

It localises to the cytoplasm. Responsible for the release of ribosomes from messenger RNA at the termination of protein biosynthesis. May increase the efficiency of translation by recycling ribosomes from one round of translation to another. In Francisella tularensis subsp. tularensis (strain FSC 198), this protein is Ribosome-recycling factor.